The chain runs to 175 residues: Probable DNA replication complex GINS protein PSF2 (175 aa).

Belongs to the GINS2/PSF2 family. Component of the GINS complex which is a heterotetramer of SLD5, PSF1, PSF2 and PSF3.

It localises to the nucleus. Its function is as follows. The GINS complex plays an essential role in the initiation of DNA replication. The protein is Probable DNA replication complex GINS protein PSF2 of Encephalitozoon cuniculi (strain GB-M1) (Microsporidian parasite).